A 242-amino-acid chain; its full sequence is Glutamine transport ATP-binding protein GlnQ (242 aa).

The ABC transporter domain occupies 2-236 (ITFQNVNKHY…PKEERARLFL (235 aa)). Residue 34 to 41 (GPSGSGKS) participates in ATP binding.

The protein belongs to the ABC transporter superfamily. As to quaternary structure, the complex is composed of two ATP-binding proteins (GlnQ), two transmembrane proteins (GlnM and GlnP) and a solute-binding protein (GlnH).

The protein localises to the cell membrane. Its function is as follows. Part of the ABC transporter complex GlnHMPQ involved in glutamine transport. Probably responsible for energy coupling to the transport system. This Bacillus subtilis (strain 168) protein is Glutamine transport ATP-binding protein GlnQ (glnQ).